A 296-amino-acid polypeptide reads, in one-letter code: 110 kDa antigen (296 aa).

One copy of the 1; approximate repeat lies at 132–143 (EETQKTVEPEQI). A 13.5 X 12 AA approximate tandem repeats of E-E-T-Q-K-T-V-E-P-E-Q-T region spans residues 132–296 (EETQKTVEPE…TQETQNTVEP (165 aa)). The disordered stretch occupies residues 133 to 296 (ETQKTVEPEQ…TQETQNTVEP (164 aa)). Residues 144 to 155 (EETQNTVEPEQT) form a 2; approximate repeat. The stretch at 156-167 (EETQKTVEPEQT) is repeat 3. One copy of the 4; approximate repeat lies at 168–179 (EETQNTVEPEQI). Copy 5 of the repeat occupies 180-191 (EETQKTVEPEQT). Residues 181 to 271 (ETQKTVEPEQ…QTEETQKTVE (91 aa)) are compositionally biased toward basic and acidic residues. The stretch at 192–203 (EEAQKTVEPEQT) is one 6; approximate repeat. 6 tandem repeats follow at residues 204-215 (EETQKTVEPEQT), 216-227 (EETQKTVEPEQT), 228-239 (EETQKTVEPEQT), 240-251 (EETQKTVEPEQT), 252-263 (EETQKTVEPEQT), and 264-275 (EETQKTVEPEQT). A 13; approximate repeat occupies 276–287 (EETQNTVEPEPT). Polar residues predominate over residues 277-296 (ETQNTVEPEPTQETQNTVEP). The stretch at 288–293 (QETQNT) is one 14; truncated repeat.

This Plasmodium knowlesi protein is 110 kDa antigen.